The sequence spans 124 residues: Glycine cleavage system H protein (124 aa).

Residues 22-103 (VFVVGITDNA…AYTAWIFKIK (82 aa)) enclose the Lipoyl-binding domain. At Lys-63 the chain carries N6-lipoyllysine.

It belongs to the GcvH family. As to quaternary structure, the glycine cleavage system is composed of four proteins: P, T, L and H. It depends on (R)-lipoate as a cofactor.

Functionally, the glycine cleavage system catalyzes the degradation of glycine. The H protein shuttles the methylamine group of glycine from the P protein to the T protein. This Bordetella pertussis (strain Tohama I / ATCC BAA-589 / NCTC 13251) protein is Glycine cleavage system H protein.